A 296-amino-acid chain; its full sequence is Putative S-adenosyl-L-methionine-dependent methyltransferase MAP_3881 (296 aa).

S-adenosyl-L-methionine contacts are provided by residues Asp-121 and 150–151 (DL).

This sequence belongs to the UPF0677 family.

Its function is as follows. Exhibits S-adenosyl-L-methionine-dependent methyltransferase activity. This is Putative S-adenosyl-L-methionine-dependent methyltransferase MAP_3881 from Mycolicibacterium paratuberculosis (strain ATCC BAA-968 / K-10) (Mycobacterium paratuberculosis).